The chain runs to 58 residues: Leucine zipper protein 6 (58 aa).

In terms of tissue distribution, widely expressed, highest levels found in brain, placenta, spleen, testis, and ovary. Up-regulated in some tumor cells.

In Homo sapiens (Human), this protein is Leucine zipper protein 6 (LUZP6).